Reading from the N-terminus, the 223-residue chain is MKRTKSIRHASFRKNWSARHLTPVALAVATVFMLAGCEKSDETVSLYQNADDCSAANPGKSAECTTAYNNALKEAERTAPKYATREDCVAEFGEGQCQQAPAQAGMAPENQAQAQQSSGSFWMPLMAGYMMGRLMGGGAGFAQQPLFSSKNPASPAYGKYTDATGKNYGAAQPGRTMTVPKTAMAPKPATTTTVTRGGFGESVAKQSTMQRGATGTSSRSMGG.

Residues 178 to 195 are compositionally biased toward low complexity; sequence TVPKTAMAPKPATTTTVT. The tract at residues 178–223 is disordered; sequence TVPKTAMAPKPATTTTVTRGGFGESVAKQSTMQRGATGTSSRSMGG. The segment covering 204-223 has biased composition (polar residues); that stretch reads AKQSTMQRGATGTSSRSMGG.

The protein belongs to the UPF0441 family.

In Escherichia coli O6:K15:H31 (strain 536 / UPEC), this protein is UPF0441 protein YgiB.